The following is a 180-amino-acid chain: Cytokinin-beta-glucosidase 1 (180 aa).

Functionally, hydrolyzes cytokinin glucosides thus liberating free cytokinins. This Linaria vulgaris (Toadflax) protein is Cytokinin-beta-glucosidase 1 (ROLC1).